A 1450-amino-acid chain; its full sequence is DNA-directed RNA polymerase III subunit rpc1 (1450 aa).

Residues Cys67, Cys70, Cys77, His80, Cys107, Cys110, and Cys154 each coordinate Zn(2+). Asp491, Asp493, and Asp495 together coordinate Mg(2+). Residues 832–844 form a bridging helix region; that stretch reads PTEFFFHTMGGRE.

It belongs to the RNA polymerase beta' chain family. In terms of assembly, component of the RNA polymerase III (Pol III) complex consisting of 17 subunits.

Its subcellular location is the nucleus. The catalysed reaction is RNA(n) + a ribonucleoside 5'-triphosphate = RNA(n+1) + diphosphate. In terms of biological role, DNA-dependent RNA polymerase catalyzes the transcription of DNA into RNA using the four ribonucleoside triphosphates as substrates. Largest and catalytic core component of RNA polymerase III which synthesizes small RNAs, such as 5S rRNA and tRNAs. Forms the polymerase active center together with the second largest subunit. A single-stranded DNA template strand of the promoter is positioned within the central active site cleft of Pol III. A bridging helix emanates from RPC1 and crosses the cleft near the catalytic site and is thought to promote translocation of Pol III by acting as a ratchet that moves the RNA-DNA hybrid through the active site by switching from straight to bent conformations at each step of nucleotide addition. In Dictyostelium discoideum (Social amoeba), this protein is DNA-directed RNA polymerase III subunit rpc1 (polr3a).